A 276-amino-acid chain; its full sequence is Pantothenate synthetase (276 aa).

26–33 (MGFLHAGH) serves as a coordination point for ATP. His-33 serves as the catalytic Proton donor. Residue Gln-57 participates in (R)-pantoate binding. Gln-57 contacts beta-alanine. 143 to 146 (GQKD) is a binding site for ATP. Gln-149 contacts (R)-pantoate. ATP contacts are provided by residues Ile-172 and 180-183 (MSSR).

It belongs to the pantothenate synthetase family. In terms of assembly, homodimer.

It is found in the cytoplasm. It catalyses the reaction (R)-pantoate + beta-alanine + ATP = (R)-pantothenate + AMP + diphosphate + H(+). It functions in the pathway cofactor biosynthesis; (R)-pantothenate biosynthesis; (R)-pantothenate from (R)-pantoate and beta-alanine: step 1/1. Its function is as follows. Catalyzes the condensation of pantoate with beta-alanine in an ATP-dependent reaction via a pantoyl-adenylate intermediate. This is Pantothenate synthetase from Herpetosiphon aurantiacus (strain ATCC 23779 / DSM 785 / 114-95).